Reading from the N-terminus, the 277-residue chain is NH(3)-dependent NAD(+) synthetase (277 aa).

Residue 36 to 43 participates in ATP binding; sequence GLSGGIDS. Residue Asp42 participates in Mg(2+) binding. Arg118 provides a ligand contact to deamido-NAD(+). Thr138 contributes to the ATP binding site. Glu143 is a Mg(2+) binding site. Residues Lys167 and Ser189 each coordinate ATP.

It belongs to the NAD synthetase family. Homodimer.

The enzyme catalyses deamido-NAD(+) + NH4(+) + ATP = AMP + diphosphate + NAD(+) + H(+). It functions in the pathway cofactor biosynthesis; NAD(+) biosynthesis; NAD(+) from deamido-NAD(+) (ammonia route): step 1/1. Catalyzes the ATP-dependent amidation of deamido-NAD to form NAD. Uses ammonia as a nitrogen source. This Chlorobaculum parvum (strain DSM 263 / NCIMB 8327) (Chlorobium vibrioforme subsp. thiosulfatophilum) protein is NH(3)-dependent NAD(+) synthetase.